A 627-amino-acid polypeptide reads, in one-letter code: (-)-alpha-pinene synthase 2, chloroplastic (627 aa).

The transit peptide at 1 to 36 (MALVSVAPMASRSCLHKSLSSSAHELKTICRTIPTL) directs the protein to the chloroplast. Mg(2+) contacts are provided by Asp378, Asp382, and Asp530. The short motif at 378-382 (DDMYD) is the DDXXD motif element.

The protein belongs to the terpene synthase family. Tpsd subfamily. Requires Mg(2+) as cofactor. Mn(2+) is required as a cofactor.

It is found in the plastid. It localises to the chloroplast. It carries out the reaction (2E)-geranyl diphosphate = (1S,5S)-alpha-pinene + diphosphate. The enzyme catalyses (2E)-geranyl diphosphate = (1S,5S)-beta-pinene + diphosphate. It functions in the pathway terpene metabolism; oleoresin biosynthesis. Its function is as follows. Involved in defensive oleoresin formation in conifers in response to insect attack or other injury. Involved in monoterpene (C10) olefins biosynthesis. A mixture of alpha- and beta-pinene (35:10) is produced by this enzyme. The sequence is that of (-)-alpha-pinene synthase 2, chloroplastic from Picea sitchensis (Sitka spruce).